Reading from the N-terminus, the 329-residue chain is Ribosome biogenesis regulatory protein homolog (329 aa).

Disordered stretches follow at residues 227–248 (KANI…VSAE) and 262–329 (KKAK…NKRK). The segment covering 278 to 295 (LREKKEKQEKKGAKEATR) has biased composition (basic and acidic residues). The span at 320–329 (AKKKGANKRK) shows a compositional bias: basic residues.

This sequence belongs to the RRS1 family.

The protein resides in the nucleus. Its subcellular location is the nucleolus. In terms of biological role, involved in ribosomal large subunit assembly. The chain is Ribosome biogenesis regulatory protein homolog from Caenorhabditis briggsae.